The sequence spans 435 residues: Adenylosuccinate synthetase (435 aa).

GTP contacts are provided by residues G17–K23 and G45–T47. Catalysis depends on D18, which acts as the Proton acceptor. Residues D18 and G45 each contribute to the Mg(2+) site. Residues D18–K21, N43–H46, T134, R148, Q229, T244, and R308 each bind IMP. Residue H46 is the Proton donor of the active site. A substrate-binding site is contributed by S304–R310. GTP-binding positions include R310, K336–D338, and S418–G420.

It belongs to the adenylosuccinate synthetase family. In terms of assembly, homodimer. Mg(2+) is required as a cofactor.

The protein resides in the cytoplasm. The enzyme catalyses IMP + L-aspartate + GTP = N(6)-(1,2-dicarboxyethyl)-AMP + GDP + phosphate + 2 H(+). The protein operates within purine metabolism; AMP biosynthesis via de novo pathway; AMP from IMP: step 1/2. Plays an important role in the de novo pathway of purine nucleotide biosynthesis. Catalyzes the first committed step in the biosynthesis of AMP from IMP. This chain is Adenylosuccinate synthetase, found in Bordetella pertussis (strain Tohama I / ATCC BAA-589 / NCTC 13251).